The following is an 88-amino-acid chain: PTS system cellobiose-specific EIIB component (88 aa).

The PTS EIIB type-3 domain maps to 3–88 (KKRIYLFCSA…IDTLLYGKVD (86 aa)). Cysteine 10 serves as the catalytic Phosphocysteine intermediate. The residue at position 10 (cysteine 10) is a Phosphocysteine; by EIIA.

It is found in the cytoplasm. It catalyses the reaction D-cellobiose(out) + N(pros)-phospho-L-histidyl-[protein] = 6-phospho-beta-D-glucosyl-(1-&gt;4)-D-glucose(in) + L-histidyl-[protein]. Its function is as follows. The phosphoenolpyruvate-dependent sugar phosphotransferase system (sugar PTS), a major carbohydrate active transport system, catalyzes the phosphorylation of incoming sugar substrates concomitantly with their translocation across the cell membrane. The enzyme II CelABD PTS system is involved in cellobiose transport. This Aeromonas hydrophila protein is PTS system cellobiose-specific EIIB component.